The primary structure comprises 170 residues: Large ribosomal subunit protein uL6m (170 aa).

Belongs to the universal ribosomal protein uL6 family.

It localises to the mitochondrion. This is Large ribosomal subunit protein uL6m (mrpl6) from Dictyostelium discoideum (Social amoeba).